The sequence spans 90 residues: Small ribosomal subunit protein bS20 (90 aa).

Belongs to the bacterial ribosomal protein bS20 family.

In terms of biological role, binds directly to 16S ribosomal RNA. In Fusobacterium nucleatum subsp. nucleatum (strain ATCC 25586 / DSM 15643 / BCRC 10681 / CIP 101130 / JCM 8532 / KCTC 2640 / LMG 13131 / VPI 4355), this protein is Small ribosomal subunit protein bS20.